A 541-amino-acid chain; its full sequence is MTSIDTLWLLLCAGLVFFMQAGFMCLESGLTRSKNSINVAIKNFADFGISVALFWSFGFSIMFGLSQGGWWGTGYSFVDVGGEPTLAVFFLFQAMFCGTATTIISGAAAERLKFSAYLLVAGLASGLIYPLFGDWAWNGLATVAGIETTGGWLENLGFRDFAGSTVVHSVGAWIGLATILVVGPRQGRFPKTGKTLKIQGSNMPFSVLGTLILWFGWLGFNGGSTFGLTPEVPGIMVNTVLAGVGGMLMAGLISLLQDKMIQVEPLMNGSLAGLVAITASANVVMTPIAMVIGATGSAIAYLVGKKMLHWGVDDAVDAVAVHGGAGVWGTLCVGLFGQLPLVDTGLNRWQQCGVQLLGIGVCTLWAFGLAWVFLTLLNRVFALRISPEDEEIGLNVSEHQATTETYELFQVMDRQAKTHDLSLRVPVNPFTEVGHIAGRYNQVMDAFEARHHRSVEDLAQIYYVTAAIAAAIENNSFKADQLGLEEVTNRADELGALARTIQQMAEMLQQRDQELIAVKQQLVLQQQKQHHGNGESVDLSP.

Transmembrane regions (helical) follow at residues 6-26 (TLWLLLCAGLVFFMQAGFMCL), 44-64 (FADFGISVALFWSFGFSIMFG), 86-106 (LAVFFLFQAMFCGTATTIISG), 117-137 (YLLVAGLASGLIYPLFGDWAW), 161-181 (FAGSTVVHSVGAWIGLATILV), 203-223 (MPFSVLGTLILWFGWLGFNGG), 235-255 (IMVNTVLAGVGGMLMAGLISL), 260-280 (MIQVEPLMNGSLAGLVAITAS), 283-303 (VVMTPIAMVIGATGSAIAYLV), 316-336 (VDAVAVHGGAGVWGTLCVGLF), and 356-376 (LLGIGVCTLWAFGLAWVFLTL).

This sequence belongs to the ammonia transporter channel (TC 1.A.11.2) family.

Its subcellular location is the cell membrane. The chain is Putative ammonium transporter sll0537 from Synechocystis sp. (strain ATCC 27184 / PCC 6803 / Kazusa).